The sequence spans 902 residues: HTH-type transcriptional regulator MalT (902 aa).

Residue 39 to 46 coordinates ATP; it reads SPAGYGKT. The region spanning 830 to 895 is the HTH luxR-type domain; the sequence is ELIRTSPLTQ…DAVQHAQQLL (66 aa). The H-T-H motif DNA-binding region spans 854–873; sequence NEQIAGELAVAATTIKTHIR.

This sequence belongs to the MalT family. In terms of assembly, monomer in solution. Oligomerizes to an active state in the presence of the positive effectors ATP and maltotriose.

Activated by ATP and maltotriose, which are both required for DNA binding. Functionally, positively regulates the transcription of the maltose regulon whose gene products are responsible for uptake and catabolism of malto-oligosaccharides. Specifically binds to the promoter region of its target genes, recognizing a short DNA motif called the MalT box. The protein is HTH-type transcriptional regulator MalT of Salmonella dublin (strain CT_02021853).